The following is a 354-amino-acid chain: Putative [LysW]-L-2-aminoadipate/[LysW]-L-glutamate phosphate reductase (354 aa).

NADP(+)-binding positions include 10 to 13 and 34 to 36; these read SGVI and SRR. C153 is an active-site residue. N321 provides a ligand contact to NADP(+).

This sequence belongs to the NAGSA dehydrogenase family. Type 1 subfamily. LysY sub-subfamily.

The protein resides in the cytoplasm. It catalyses the reaction [amino-group carrier protein]-C-terminal-N-(1-carboxy-5-oxopentan-1-yl)-L-glutamine + phosphate + NADP(+) = [amino-group carrier protein]-C-terminal-N-(1-carboxy-5-phosphooxy-5-oxopentan-1-yl)-L-glutamine + NADPH + H(+). It carries out the reaction [amino-group carrier protein]-C-terminal-gamma-(L-glutamyl-5-semialdehyde)-L-glutamate + phosphate + NADP(+) = [amino-group carrier protein]-C-terminal-gamma-(5-phospho-L-glutamyl)-L-glutamate + NADPH + H(+). Its pathway is amino-acid biosynthesis; L-lysine biosynthesis via AAA pathway; L-lysine from L-alpha-aminoadipate (Thermus route): step 3/5. The protein operates within amino-acid biosynthesis; L-arginine biosynthesis. Involved in both the arginine and lysine biosynthetic pathways. The chain is Putative [LysW]-L-2-aminoadipate/[LysW]-L-glutamate phosphate reductase from Caldivirga maquilingensis (strain ATCC 700844 / DSM 13496 / JCM 10307 / IC-167).